Here is a 270-residue protein sequence, read N- to C-terminus: 4-hydroxy-tetrahydrodipicolinate reductase (270 aa).

Residues 9–14 and Glu35 each bind NAD(+); that span reads GAGGRM. Residue Arg36 coordinates NADP(+). NAD(+) contacts are provided by residues 99–101 and 123–126; these read GTT and ASNF. The active-site Proton donor/acceptor is His156. His157 serves as a coordination point for (S)-2,3,4,5-tetrahydrodipicolinate. The active-site Proton donor is the Lys160. 166–167 contacts (S)-2,3,4,5-tetrahydrodipicolinate; sequence GT.

Belongs to the DapB family.

It localises to the cytoplasm. It carries out the reaction (S)-2,3,4,5-tetrahydrodipicolinate + NAD(+) + H2O = (2S,4S)-4-hydroxy-2,3,4,5-tetrahydrodipicolinate + NADH + H(+). The catalysed reaction is (S)-2,3,4,5-tetrahydrodipicolinate + NADP(+) + H2O = (2S,4S)-4-hydroxy-2,3,4,5-tetrahydrodipicolinate + NADPH + H(+). It participates in amino-acid biosynthesis; L-lysine biosynthesis via DAP pathway; (S)-tetrahydrodipicolinate from L-aspartate: step 4/4. In terms of biological role, catalyzes the conversion of 4-hydroxy-tetrahydrodipicolinate (HTPA) to tetrahydrodipicolinate. The chain is 4-hydroxy-tetrahydrodipicolinate reductase from Pasteurella multocida (strain Pm70).